The sequence spans 863 residues: Leucine--tRNA ligase (863 aa).

The short motif at 42-53 is the 'HIGH' region element; it reads PYPSGSGLHVGH. Positions 635–639 match the 'KMSKS' region motif; that stretch reads KMSKS. K638 is a binding site for ATP.

Belongs to the class-I aminoacyl-tRNA synthetase family.

The protein localises to the cytoplasm. The catalysed reaction is tRNA(Leu) + L-leucine + ATP = L-leucyl-tRNA(Leu) + AMP + diphosphate. This Salinibacter ruber (strain DSM 13855 / M31) protein is Leucine--tRNA ligase.